Reading from the N-terminus, the 533-residue chain is Lanosterol 14-alpha demethylase (533 aa).

Cysteine 472 provides a ligand contact to heme.

The protein belongs to the cytochrome P450 family. It depends on heme as a cofactor.

It is found in the membrane. The enzyme catalyses a 14alpha-methyl steroid + 3 reduced [NADPH--hemoprotein reductase] + 3 O2 = a Delta(14) steroid + formate + 3 oxidized [NADPH--hemoprotein reductase] + 4 H2O + 4 H(+). The catalysed reaction is a 14alpha-methyl steroid + reduced [NADPH--hemoprotein reductase] + O2 = a 14alpha-hydroxymethyl steroid + oxidized [NADPH--hemoprotein reductase] + H2O + H(+). It carries out the reaction a 14alpha-hydroxymethyl steroid + reduced [NADPH--hemoprotein reductase] + O2 = a 14alpha-formyl steroid + oxidized [NADPH--hemoprotein reductase] + 2 H2O + H(+). It catalyses the reaction a 14alpha-formyl steroid + reduced [NADPH--hemoprotein reductase] + O2 = a Delta(14) steroid + formate + oxidized [NADPH--hemoprotein reductase] + H2O + 2 H(+). The enzyme catalyses lanosterol + 3 reduced [NADPH--hemoprotein reductase] + 3 O2 = 4,4-dimethyl-5alpha-cholesta-8,14,24-trien-3beta-ol + formate + 3 oxidized [NADPH--hemoprotein reductase] + 4 H2O + 4 H(+). The catalysed reaction is lanosterol + reduced [NADPH--hemoprotein reductase] + O2 = 32-hydroxylanosterol + oxidized [NADPH--hemoprotein reductase] + H2O + H(+). It carries out the reaction 32-hydroxylanosterol + reduced [NADPH--hemoprotein reductase] + O2 = 32-oxolanosterol + oxidized [NADPH--hemoprotein reductase] + 2 H2O + H(+). It catalyses the reaction 32-oxolanosterol + reduced [NADPH--hemoprotein reductase] + O2 = 4,4-dimethyl-5alpha-cholesta-8,14,24-trien-3beta-ol + formate + oxidized [NADPH--hemoprotein reductase] + H2O + 2 H(+). The enzyme catalyses eburicol + 3 reduced [NADPH--hemoprotein reductase] + 3 O2 = 14-demethyleburicol + formate + 3 oxidized [NADPH--hemoprotein reductase] + 4 H2O + 4 H(+). The catalysed reaction is eburicol + reduced [NADPH--hemoprotein reductase] + O2 = 32-hydroxyeburicol + oxidized [NADPH--hemoprotein reductase] + H2O + H(+). It carries out the reaction 32-hydroxyeburicol + reduced [NADPH--hemoprotein reductase] + O2 = 32-oxoeburicol + oxidized [NADPH--hemoprotein reductase] + 2 H2O + H(+). It catalyses the reaction 32-oxoeburicol + reduced [NADPH--hemoprotein reductase] + O2 = 14-demethyleburicol + formate + oxidized [NADPH--hemoprotein reductase] + H2O + 2 H(+). It functions in the pathway steroid biosynthesis; zymosterol biosynthesis; zymosterol from lanosterol: step 1/6. Functionally, sterol 14alpha-demethylase that plays a critical role in the third module of ergosterol biosynthesis pathway, being ergosterol the major sterol component in fungal membranes that participates in a variety of functions. The third module or late pathway involves the ergosterol synthesis itself through consecutive reactions that mainly occur in the endoplasmic reticulum (ER) membrane. In filamentous fungi, during the initial step of this module, lanosterol (lanosta-8,24-dien-3beta-ol) can be metabolized to eburicol. Sterol 14alpha-demethylase catalyzes the three-step oxidative removal of the 14alpha-methyl group (C-32) of both these sterols in the form of formate, and converts eburicol and lanosterol to 14-demethyleburicol (4,4,24-trimethylergosta-8,14,24(28)-trienol) and 4,4-dimethyl-5alpha-cholesta-8,14,24-trien-3beta-ol, respectively, which are further metabolized by other enzymes in the pathway to ergosterol. Can also use substrates not intrinsic to fungi, such as 24,25-dihydrolanosterol (DHL), producing 4,4-dimethyl-8,14-cholestadien-3-beta-ol, but at lower rates than the endogenous substrates. The protein is Lanosterol 14-alpha demethylase (ERG11) of Candida glabrata (strain ATCC 2001 / BCRC 20586 / JCM 3761 / NBRC 0622 / NRRL Y-65 / CBS 138) (Yeast).